A 225-amino-acid chain; its full sequence is MTAIVPVITVDGPSGAGKGTLCKALAQALGWHLLDSGAIYRVLALAALHHQVNIDSEEALVPLAAHLDVRFDAAEGDLRVILEGEDVSTAIRTETVGNTASRAAAFPRVREALLRRQRAFREAPGLIADGRDMGTVVFPDAPVKIFLDASAEERAHRRMLQLQGKGFDVNFESLLAEIKERDFRDRNRAVAPLVPAVGALQLDSTSLSIEQVIAQALAHARQTLV.

Residue 12-20 (GPSGAGKGT) participates in ATP binding.

This sequence belongs to the cytidylate kinase family. Type 1 subfamily.

Its subcellular location is the cytoplasm. It catalyses the reaction CMP + ATP = CDP + ADP. It carries out the reaction dCMP + ATP = dCDP + ADP. The protein is Cytidylate kinase of Edwardsiella ictaluri (strain 93-146).